The primary structure comprises 174 residues: Transcriptional repressor NrdR (174 aa).

A zinc finger lies at 3-34 (CPFCQHSDTRVIDSRVSEDGTTIRRRRECEAC). Residues 49–139 (PTVVKSDGGR…VYRSFQDVAD (91 aa)) form the ATP-cone domain.

Belongs to the NrdR family. Zn(2+) serves as cofactor.

In terms of biological role, negatively regulates transcription of bacterial ribonucleotide reductase nrd genes and operons by binding to NrdR-boxes. The protein is Transcriptional repressor NrdR of Xanthomonas oryzae pv. oryzae (strain MAFF 311018).